The sequence spans 392 residues: Alpha-(1,3)-fucosyltransferase fut-6 (392 aa).

Residues 1-12 are Cytoplasmic-facing; it reads MSQIGGATCTWR. The helical; Signal-anchor for type II membrane protein transmembrane segment at 13–35 threads the bilayer; sequence YLGRFVTLGIYASVALFVWYTLV. At 36–392 the chain is on the lumenal side; it reads PTRSKHKDSI…CNNQIASKYL (357 aa). Asparagine 158 is a glycosylation site (N-linked (GlcNAc...) asparagine).

Belongs to the glycosyltransferase 10 family. Unlike other alpha-(1,3)-fucosyltransferases, appears not to require a divalent metal cation as cofactor. is required as a cofactor.

It is found in the golgi apparatus. It localises to the golgi stack membrane. It functions in the pathway protein modification; protein glycosylation. With respect to regulation, inhibited by divalent metal cations. In terms of biological role, involved in the fucosylation of N-glycans. Preferentially catalyzes the addition of fucose in alpha 1-3 linkage to the distal GlcNAc residue in N-glycans. Catalyzes the transfer of fucose to Gal-beta-1-4-GlcNAc-alpha-pNP (LN-pNP) and Gal-beta-1-4-GlcNAc-beta-1-3-Gal-beta-1-4-Glc (LNnT). Unlike alpha-(1,3)-fucosyltransferase fut-1, does not transfer fucose to Man-alpha-1-3-(Man-alpha-1-6)-Man-beta-1-4-GlcNAc-beta-1-4-GlcNAc-beta-1-Asn (M3), Man-alpha-1-3-(Man-alpha-1-6)-Man-beta-1-4-GlcNAc-beta-1-4-(Fuc-alpha-1-6)-GlcNAc-beta-1-Asn (M3F6) and GlcNAc-beta-1-2-Man-alpha-1-3-(GlcNAc-beta-1-2-Man-alpha-1-6)-Man-beta-1-4-GlcNAc-beta-1-4(Fuc-alpha-1-6)-GlcNAc-beta-1-Asn (GnM3F6). This is Alpha-(1,3)-fucosyltransferase fut-6 from Caenorhabditis elegans.